Here is a 189-residue protein sequence, read N- to C-terminus: Cold-regulated 413 plasma membrane protein 3 (189 aa).

At 1-24 (MENIEYLNEIQAVAGKLIHSYGVP) the chain is on the extracellular side. The chain crosses the membrane as a helical span at residues 25–45 (VMITLFLRWLASIVAVFLMIL). Topologically, residues 46–55 (DQTKWKYSNN) are cytoplasmic. Residues 56-76 (IMASLLAPYLFSSLPIVIFQV) form a helical membrane-spanning segment. The Extracellular segment spans residues 77 to 79 (LRN). A helical membrane pass occupies residues 80–100 (GVGKWIALLTVILRLFLPNHF). At 101–104 (HESL) the chain is on the cytoplasmic side. Residues 105 to 125 (EIPGATILLIVVTPSDIGAIF) traverse the membrane as a helical segment. Residues 126 to 168 (RDDLRYTGGDVCLLTSFYLINKHTKACGGIKNSFTQKDKVTYS) lie on the Extracellular side of the membrane. A helical membrane pass occupies residues 169–189 (ICLWILFVYPILSSFAALFYL).

It belongs to the Cold-regulated 413 protein family.

It localises to the cell membrane. The chain is Cold-regulated 413 plasma membrane protein 3 from Arabidopsis thaliana (Mouse-ear cress).